The primary structure comprises 77 residues: Cell division topological specificity factor (77 aa).

Belongs to the MinE family.

In terms of biological role, prevents the cell division inhibition by proteins MinC and MinD at internal division sites while permitting inhibition at polar sites. This ensures cell division at the proper site by restricting the formation of a division septum at the midpoint of the long axis of the cell. This Helicobacter pylori (strain Shi470) protein is Cell division topological specificity factor.